Consider the following 457-residue polypeptide: Methylenetetrahydrofolate--tRNA-(uracil-5-)-methyltransferase TrmFO (457 aa).

8 to 13 provides a ligand contact to FAD; sequence GGGLAG.

This sequence belongs to the MnmG family. TrmFO subfamily. FAD is required as a cofactor.

Its subcellular location is the cytoplasm. The catalysed reaction is uridine(54) in tRNA + (6R)-5,10-methylene-5,6,7,8-tetrahydrofolate + NADH + H(+) = 5-methyluridine(54) in tRNA + (6S)-5,6,7,8-tetrahydrofolate + NAD(+). The enzyme catalyses uridine(54) in tRNA + (6R)-5,10-methylene-5,6,7,8-tetrahydrofolate + NADPH + H(+) = 5-methyluridine(54) in tRNA + (6S)-5,6,7,8-tetrahydrofolate + NADP(+). Functionally, catalyzes the folate-dependent formation of 5-methyl-uridine at position 54 (M-5-U54) in all tRNAs. In Thermosynechococcus vestitus (strain NIES-2133 / IAM M-273 / BP-1), this protein is Methylenetetrahydrofolate--tRNA-(uracil-5-)-methyltransferase TrmFO.